A 299-amino-acid polypeptide reads, in one-letter code: Endonuclease 4 (299 aa).

The first 24 residues, 1-24, serve as a signal peptide directing secretion; sequence MSSSLRQWFARVLVLTQLINGALC. A divalent metal cation is bound by residues W25 and H30. 25–30 contributes to the substrate binding site; sequence WGKEGH. A disulfide bridge links C34 with C65. 2 residues coordinate a divalent metal cation: D69 and H84. Residues 69 to 75, 84 to 87, and 94 to 99 contribute to the substrate site; these read DEIKHHW, HYVD, and NYEYCR. Intrachain disulfides connect C93/C246, C101/C111, and C226/C233. 2 residues coordinate substrate: N118 and Y136. N118 carries N-linked (GlcNAc...) asparagine glycosylation. An N-linked (GlcNAc...) asparagine glycan is attached at N137. A divalent metal cation-binding residues include H147, D151, H157, H181, and D185. The tract at residues 147–196 is substrate binding; it reads HFIGDIHQPLHVGFLGDEGGNTITVRWYRRKTNLHHVWDNMIIESALKTY. N-linked (GlcNAc...) asparagine glycans are attached at residues N198, N211, and N229. Positions 284–299 are cleaved as a propeptide — removed in mature form; the sequence is ATLNRIFSSKPKHAGS.

This sequence belongs to the nuclease type I family. As to quaternary structure, monomer. Mn(2+) is required as a cofactor. The cofactor is Ca(2+).

The enzyme catalyses Endonucleolytic cleavage to 5'-phosphomononucleotide and 5'-phosphooligonucleotide end-products.. Endonuclease that can use single-stranded RNA and DNA as substrates. In contradiction with PubMed:23620482, cannot hydrolyze single-stranded DNA and does not cleave mismatches. This Arabidopsis thaliana (Mouse-ear cress) protein is Endonuclease 4.